Reading from the N-terminus, the 474-residue chain is Probable protein phosphatase 2C 37 (474 aa).

Residues 1-90 (MVMASAGVNM…RDDDGCSSTA (90 aa)) are disordered. Positions 57–77 (LPASSASPSPSPTSSAASSDC) are enriched in low complexity. In terms of domain architecture, PPM-type phosphatase spans 113–470 (AFGSVSLAGR…DNISVVVIDL (358 aa)). The Mn(2+) site is built by Asp152, Gly153, and Asp387. The disordered stretch occupies residues 406 to 434 (LEDGSPTSGRRAARSGEAASSSAGAPAAA). The span at 420-434 (SGEAASSSAGAPAAA) shows a compositional bias: low complexity. Asp461 is a Mn(2+) binding site.

The protein belongs to the PP2C family. The cofactor is Mg(2+). Mn(2+) serves as cofactor.

The catalysed reaction is O-phospho-L-seryl-[protein] + H2O = L-seryl-[protein] + phosphate. The enzyme catalyses O-phospho-L-threonyl-[protein] + H2O = L-threonyl-[protein] + phosphate. In Oryza sativa subsp. japonica (Rice), this protein is Probable protein phosphatase 2C 37.